The sequence spans 257 residues: ABC transporter ATP-binding protein YxdL (257 aa).

Residues 5 to 243 (LEVKHINKTY…FYEQILDVLS (239 aa)) form the ABC transporter domain. Residue 40–47 (GPSGSGKT) participates in ATP binding.

Belongs to the ABC transporter superfamily. The complex is composed of two ATP-binding proteins (YxdL) and two transmembrane proteins (YxdM).

In terms of biological role, part of the ABC transporter complex YxdLM which could be involved in peptide resistance. Responsible for energy coupling to the transport system. The protein is ABC transporter ATP-binding protein YxdL (yxdL) of Bacillus subtilis (strain 168).